Consider the following 258-residue polypeptide: 5'-nucleotidase SurE (258 aa).

Positions 14, 15, 45, and 101 each coordinate a divalent metal cation.

The protein belongs to the SurE nucleotidase family. The cofactor is a divalent metal cation.

The protein resides in the cytoplasm. The enzyme catalyses a ribonucleoside 5'-phosphate + H2O = a ribonucleoside + phosphate. Nucleotidase that shows phosphatase activity on nucleoside 5'-monophosphates. The polypeptide is 5'-nucleotidase SurE (Chlorobium limicola (strain DSM 245 / NBRC 103803 / 6330)).